A 344-amino-acid polypeptide reads, in one-letter code: MKQTKTKYGKMKQMVSNLKLPDYRYEQLTKAIFHQRIDNFDDIHILPKALRMSLVNEFGKNVSSVIPVFSQDSKQAQKLLFELTDGERIEAVGLKYKQGWESFCISSQCGCGFGCRFCATGSAGFKRNLTADEITDQLLYFYFNNHRLNSISFMGMGEAFANPELFDAVKILTDQNLFGLSQRRITISTIGIIPGIQRLTKKFPQVNLAFSLHSPFESRRSDLMPINKRFPLNEVMKTLDEHIIHTGRRVFIAYIMLEGINDSKEHAEAVVGLLKNRGSWEHLYHIDLIPYNSTDKTTFKFQSSSAIKQFCSTLKKAGISATVRTQFGSEISAACGQLCYENEL.

Glu-90 functions as the Proton acceptor in the catalytic mechanism. Positions 97 to 330 constitute a Radical SAM core domain; it reads KQGWESFCIS…ATVRTQFGSE (234 aa). Cys-104 and Cys-335 are joined by a disulfide. [4Fe-4S] cluster is bound by residues Cys-111, Cys-115, and Cys-118. Residues 157–158, Ser-188, 211–213, and Asn-292 contribute to the S-adenosyl-L-methionine site; these read GE and SLH. Residue Cys-335 is the S-methylcysteine intermediate of the active site.

The protein belongs to the radical SAM superfamily. RlmN family. Cfr subfamily. [4Fe-4S] cluster is required as a cofactor.

The protein localises to the cytoplasm. It catalyses the reaction adenosine(2503) in 23S rRNA + 2 reduced [2Fe-2S]-[ferredoxin] + 2 S-adenosyl-L-methionine = 8-methyladenosine(2503) in 23S rRNA + 5'-deoxyadenosine + L-methionine + 2 oxidized [2Fe-2S]-[ferredoxin] + S-adenosyl-L-homocysteine. Its function is as follows. Specifically methylates position 8 of adenine 2503 in 23S rRNA. Confers resistance to some classes of antibiotics. The polypeptide is Ribosomal RNA large subunit methyltransferase Cfr (Clostridium botulinum (strain Okra / Type B1)).